The chain runs to 293 residues: Putative immediate early glycoprotein (293 aa).

The N-terminal stretch at 1–21 is a signal peptide; the sequence is MKKLTMESLSVYIFVMGVCFT. N-linked (GlcNAc...) asparagine; by host glycosylation is found at Asn-23, Asn-55, Asn-83, Asn-120, Asn-150, Asn-156, Asn-168, Asn-212, and Asn-249. Residues 262 to 282 traverse the membrane as a helical segment; it reads LFFLAGGAFTMLLLLCCLSMI.

It belongs to the herpesviridae immediate early glycoprotein family.

The protein localises to the membrane. The polypeptide is Putative immediate early glycoprotein (U18) (Human herpesvirus 6A (strain Uganda-1102) (HHV-6 variant A)).